A 235-amino-acid polypeptide reads, in one-letter code: MGQKVNPHGIRLGIVKPWSSTWFANTQDFASNLDGDFKVRKFLNKELANASVSRITIERPAKSIRVTIHTARPGIVIGKKGEDVEKLRNAVAKIAGVPAQINIAEVKKPELDAKLVADSIASQLERRVMFRRAMKRAVQNAMRLGAKGIKVEVSGRLGGAEIARSEWYREGRVPLHTLRADIDYNTSEAHTTYGVIGVKVWIFKGEILGGMAAIAQQPEQQPAAPKKAPRGKGRK.

Residues 39–107 (VRKFLNKELA…PAQINIAEVK (69 aa)) form the KH type-2 domain.

It belongs to the universal ribosomal protein uS3 family. In terms of assembly, part of the 30S ribosomal subunit. Forms a tight complex with proteins S10 and S14.

Binds the lower part of the 30S subunit head. Binds mRNA in the 70S ribosome, positioning it for translation. This Mannheimia succiniciproducens (strain KCTC 0769BP / MBEL55E) protein is Small ribosomal subunit protein uS3.